The chain runs to 149 residues: Transcriptional repressor NrdR (149 aa).

A zinc finger lies at 3–34 (CPFCAMEETKVIDSRLVSDGYQVRRRRECGYC). The ATP-cone domain maps to 49–139 (PKIIKNDGSR…VYLSFDDINQ (91 aa)).

The protein belongs to the NrdR family. The cofactor is Zn(2+).

In terms of biological role, negatively regulates transcription of bacterial ribonucleotide reductase nrd genes and operons by binding to NrdR-boxes. The sequence is that of Transcriptional repressor NrdR from Histophilus somni (strain 129Pt) (Haemophilus somnus).